The sequence spans 437 residues: Septin-7 (437 aa).

Position 2 is an N-acetylserine (Ser2). Tyr30 is subject to Phosphotyrosine. One can recognise a Septin-type G domain in the interval 47-316 (RGFEFTLMVV…ENYRSRKLAA (270 aa)). Positions 47–317 (RGFEFTLMVV…NYRSRKLAAV (271 aa)) are interaction with SEPTIN12. The segment at 57–64 (GESGLGKS) is G1 motif. 57–64 (GESGLGKS) is a binding site for GTP. The residue at position 77 (Ser77) is a Phosphoserine. GTP-binding positions include Thr90, Gly116, and 195–203 (KADTLTPEE). Residues 113–116 (DTPG) form a G3 motif region. Positions 194 to 197 (AKAD) are G4 motif. Thr228 is subject to Phosphothreonine. Gly250 and Arg265 together coordinate GTP. The stretch at 332-433 (TKSPLAQMEE…SRTLEKNKKK (102 aa)) forms a coiled coil. Residue Ser334 is modified to Phosphoserine. Lys373 carries the post-translational modification N6-acetyllysine. Over residues 378 to 410 (ELQRRHEQMKKNLEAQHKELEEKRRQFEDEKAN) the composition is skewed to basic and acidic residues. The segment at 378–437 (ELQRRHEQMKKNLEAQHKELEEKRRQFEDEKANWEAQQRILEQQNSSRTLEKNKKKGKIF) is disordered. Ser424 is modified (phosphoserine). A Phosphothreonine modification is found at Thr426.

This sequence belongs to the TRAFAC class TrmE-Era-EngA-EngB-Septin-like GTPase superfamily. Septin GTPase family. In terms of assembly, septins polymerize into heterooligomeric protein complexes that form filaments, and associate with cellular membranes, actin filaments and microtubules. GTPase activity is required for filament formation. Filaments are assembled from asymmetrical heterotrimers, composed of SEPTIN2, SEPTIN6 and SEPTIN7 that associate head-to-head to form a hexameric unit. Within the trimer, directly interacts with SEPTIN6, while interaction with SEPTIN2 seems indirect. In the absence of SEPTIN6, forms homodimers. Interacts directly with CENPE and links CENPE to septin filaments composed of SEPTIN2, SEPTIN6 and SEPTIN7. Interacts with SEPTIN5, SEPTIN8, SEPTIN9 and SEPTIN11. Component of a septin core octameric complex consisting of SEPTIN12, SEPTIN7, SEPTIN6 and SEPTIN2 or SEPTIN4 in the order 12-7-6-2-2-6-7-12 or 12-7-6-4-4-6-7-12 and located in the sperm annulus; the SEPTIN12:SEPTIN7 association is mediated by the respective GTP-binding domains.

It localises to the cytoplasm. The protein localises to the chromosome. It is found in the centromere. The protein resides in the kinetochore. Its subcellular location is the cytoskeleton. It localises to the spindle. The protein localises to the cleavage furrow. It is found in the midbody. The protein resides in the cilium axoneme. Its subcellular location is the cell projection. It localises to the cilium. The protein localises to the flagellum. Functionally, filament-forming cytoskeletal GTPase. Required for normal organization of the actin cytoskeleton. Required for normal progress through mitosis. Involved in cytokinesis. Required for normal association of CENPE with the kinetochore. Plays a role in ciliogenesis and collective cell movements. Forms a filamentous structure with SEPTIN12, SEPTIN6, SEPTIN2 and probably SEPTIN4 at the sperm annulus which is required for the structural integrity and motility of the sperm tail during postmeiotic differentiation. In Bos taurus (Bovine), this protein is Septin-7.